Consider the following 453-residue polypeptide: tRNA modification GTPase MnmE (453 aa).

(6S)-5-formyl-5,6,7,8-tetrahydrofolate contacts are provided by Arg22, Glu79, and Lys119. One can recognise a TrmE-type G domain in the interval Gly215–Gly376. A K(+)-binding site is contributed by Asn225. GTP-binding positions include Asn225–Ser230, Thr244–Thr250, Asp269–Gly272, and Asn334–Asp337. Ser229 provides a ligand contact to Mg(2+). K(+) is bound by residues Thr244, Ile246, and Thr249. Mg(2+) is bound at residue Thr250. Lys453 contributes to the (6S)-5-formyl-5,6,7,8-tetrahydrofolate binding site.

Belongs to the TRAFAC class TrmE-Era-EngA-EngB-Septin-like GTPase superfamily. TrmE GTPase family. As to quaternary structure, homodimer. Heterotetramer of two MnmE and two MnmG subunits. K(+) serves as cofactor.

Its subcellular location is the cytoplasm. In terms of biological role, exhibits a very high intrinsic GTPase hydrolysis rate. Involved in the addition of a carboxymethylaminomethyl (cmnm) group at the wobble position (U34) of certain tRNAs, forming tRNA-cmnm(5)s(2)U34. In Shewanella oneidensis (strain ATCC 700550 / JCM 31522 / CIP 106686 / LMG 19005 / NCIMB 14063 / MR-1), this protein is tRNA modification GTPase MnmE.